We begin with the raw amino-acid sequence, 250 residues long: UPF0014 membrane protein YjkA (250 aa).

Helical transmembrane passes span 3–23 (YLSLSLTMIFVLIALFLSKSF), 32–52 (IIATIRAAVQLLIIGYVLSLI), 57–77 (HPVFILLMVLLMLAVAAQNVI), 91–111 (FAALAIVEIVTQGILLSLHII), 117–137 (YVIPISGMVIGNSMVLSSLFL), and 214–234 (LLIVFTTMASAALTCVILSVL).

It belongs to the UPF0014 family.

It is found in the cell membrane. This is UPF0014 membrane protein YjkA (yjkA) from Bacillus subtilis (strain 168).